A 225-amino-acid chain; its full sequence is PKHD-type hydroxylase KPK_3192 (225 aa).

One can recognise a Fe2OG dioxygenase domain in the interval 78 to 177 (TISAPLFNRY…RQASFLWIQS (100 aa)). Fe cation is bound by residues His96, Asp98, and His158. Arg168 contributes to the 2-oxoglutarate binding site.

Fe(2+) is required as a cofactor. It depends on L-ascorbate as a cofactor.

The polypeptide is PKHD-type hydroxylase KPK_3192 (Klebsiella pneumoniae (strain 342)).